A 362-amino-acid chain; its full sequence is Cobalt-precorrin-5B C(1)-methyltransferase (362 aa).

It belongs to the CbiD family.

It catalyses the reaction Co-precorrin-5B + S-adenosyl-L-methionine = Co-precorrin-6A + S-adenosyl-L-homocysteine. Its pathway is cofactor biosynthesis; adenosylcobalamin biosynthesis; cob(II)yrinate a,c-diamide from sirohydrochlorin (anaerobic route): step 6/10. Functionally, catalyzes the methylation of C-1 in cobalt-precorrin-5B to form cobalt-precorrin-6A. This Burkholderia cenocepacia (strain ATCC BAA-245 / DSM 16553 / LMG 16656 / NCTC 13227 / J2315 / CF5610) (Burkholderia cepacia (strain J2315)) protein is Cobalt-precorrin-5B C(1)-methyltransferase.